A 245-amino-acid chain; its full sequence is UPF0246 protein cgR_1824 (245 aa).

The protein belongs to the UPF0246 family.

This Corynebacterium glutamicum (strain R) protein is UPF0246 protein cgR_1824.